We begin with the raw amino-acid sequence, 86 residues long: Phosphocarrier protein HPr (86 aa).

The HPr domain maps to 1-86; sequence MVKKEAIIKA…LAELIESFKE (86 aa). Residue H15 is the Pros-phosphohistidine intermediate of the active site.

Belongs to the HPr family.

It localises to the cytoplasm. Functionally, general (non sugar-specific) component of the phosphoenolpyruvate-dependent sugar phosphotransferase system (sugar PTS). This major carbohydrate active-transport system catalyzes the phosphorylation of incoming sugar substrates concomitantly with their translocation across the cell membrane. The phosphoryl group from phosphoenolpyruvate (PEP) is transferred to the phosphoryl carrier protein HPr by enzyme I. Phospho-HPr then transfers it to the PTS EIIA domain. The protein is Phosphocarrier protein HPr (ptsH) of Borreliella burgdorferi (strain ATCC 35210 / DSM 4680 / CIP 102532 / B31) (Borrelia burgdorferi).